The chain runs to 1103 residues: A disintegrin and metalloproteinase with thrombospondin motifs 10 (1103 aa).

The signal sequence occupies residues 1 to 25 (MAPACQILRWALALGLGLMFEVTHA). Residues 26 to 233 (FRSQDEFLSS…TERGQPGLKR (208 aa)) constitute a propeptide that is removed on maturation. Asparagine 90, asparagine 222, and asparagine 323 each carry an N-linked (GlcNAc...) asparagine glycan. Positions 213 to 233 (KPPPARPLGNETERGQPGLKR) are disordered. Residues 239-457 (RYVETLVVAD…GLGLCLNNRP (219 aa)) form the Peptidase M12B domain. Disulfide bonds link cysteine 315/cysteine 376, cysteine 351/cysteine 358, cysteine 370/cysteine 452, cysteine 409/cysteine 436, cysteine 479/cysteine 501, cysteine 490/cysteine 508, cysteine 496/cysteine 531, cysteine 521/cysteine 536, cysteine 559/cysteine 596, cysteine 563/cysteine 601, and cysteine 574/cysteine 586. Position 392 (histidine 392) interacts with Zn(2+). Residue glutamate 393 is part of the active site. Positions 396 and 402 each coordinate Zn(2+). The Disintegrin domain occupies 460–546 (QDFVYPTVAP…VPFGSRPEGV (87 aa)). A TSP type-1 1 domain is found at 547-602 (DGAWGPWTPWGDCSRTCGGGVSSSSRHCDSPRPTIGGKYCLGERRRHRSCNTDDCP). The segment at 706–828 (ETIEGVFSPA…IARDSLPPYS (123 aa)) is spacer. 2 N-linked (GlcNAc...) asparagine glycosylation sites follow: asparagine 740 and asparagine 795. TSP type-1 domains follow at residues 825-883 (PPYS…NTEP), 884-945 (CPPD…PTCP), 947-1001 (EWAA…NLRR), and 1003-1058 (PPAR…AKCD). N-linked (GlcNAc...) asparagine glycosylation occurs at asparagine 892. The PLAC domain maps to 1065–1103 (GPEECKDVNKVAYCPLVLKFQFCSRAYFRQMCCKTCHGH).

Interacts with FBN1; this interaction promotes microfibrils assembly. Zn(2+) serves as cofactor. Post-translationally, glycosylated. Can be O-fucosylated by POFUT2 on a serine or a threonine residue found within the consensus sequence C1-X(2)-(S/T)-C2-G of the TSP type-1 repeat domains where C1 and C2 are the first and second cysteine residue of the repeat, respectively. Fucosylated repeats can then be further glycosylated by the addition of a beta-1,3-glucose residue by the glucosyltransferase, B3GALTL. Fucosylation mediates the efficient secretion of ADAMTS family members. Can also be C-glycosylated with one or two mannose molecules on tryptophan residues within the consensus sequence W-X-X-W of the TPRs, and N-glycosylated. These other glycosylations can also facilitate secretion. As to expression, widely expressed in adult tissues.

It is found in the secreted. It localises to the extracellular space. The protein resides in the extracellular matrix. In terms of biological role, metalloprotease that participate in microfibrils assembly. Microfibrils are extracellular matrix components occurring independently or along with elastin in the formation of elastic tissues. The sequence is that of A disintegrin and metalloproteinase with thrombospondin motifs 10 (ADAMTS10) from Homo sapiens (Human).